Here is a 741-residue protein sequence, read N- to C-terminus: Methionine--tRNA ligase (741 aa).

The short motif at 11–21 (PYANGPIHAGH) is the 'HIGH' region element. Positions 143, 146, 156, and 159 each coordinate Zn(2+). Residues 345-349 (KFSTS) carry the 'KMSKS' region motif. T348 contacts ATP. The 101-residue stretch at 641-741 (EFAKLDLRVG…KEVKLGARIR (101 aa)) folds into the tRNA-binding domain.

It belongs to the class-I aminoacyl-tRNA synthetase family. MetG type 1 subfamily. In terms of assembly, homodimer. It depends on Zn(2+) as a cofactor.

It localises to the cytoplasm. It catalyses the reaction tRNA(Met) + L-methionine + ATP = L-methionyl-tRNA(Met) + AMP + diphosphate. Is required not only for elongation of protein synthesis but also for the initiation of all mRNA translation through initiator tRNA(fMet) aminoacylation. This chain is Methionine--tRNA ligase, found in Thermococcus kodakarensis (strain ATCC BAA-918 / JCM 12380 / KOD1) (Pyrococcus kodakaraensis (strain KOD1)).